Here is a 291-residue protein sequence, read N- to C-terminus: N-acetylmannosamine kinase (291 aa).

ATP contacts are provided by residues 5 to 12 (AIDIGGTK) and 132 to 139 (GVGGGVVS). Positions 156, 166, 168, and 173 each coordinate Zn(2+).

This sequence belongs to the ROK (NagC/XylR) family. NanK subfamily. As to quaternary structure, homodimer.

The catalysed reaction is an N-acyl-D-mannosamine + ATP = an N-acyl-D-mannosamine 6-phosphate + ADP + H(+). It functions in the pathway amino-sugar metabolism; N-acetylneuraminate degradation; D-fructose 6-phosphate from N-acetylneuraminate: step 2/5. Functionally, catalyzes the phosphorylation of N-acetylmannosamine (ManNAc) to ManNAc-6-P. The polypeptide is N-acetylmannosamine kinase (nanK1) (Escherichia coli O6:H1 (strain CFT073 / ATCC 700928 / UPEC)).